Reading from the N-terminus, the 237-residue chain is Ribosomal RNA small subunit methyltransferase G (237 aa).

Residues glycine 78, phenylalanine 83, alanine 129 to glutamate 130, and arginine 148 contribute to the S-adenosyl-L-methionine site.

The protein belongs to the methyltransferase superfamily. RNA methyltransferase RsmG family.

Its subcellular location is the cytoplasm. Functionally, specifically methylates the N7 position of a guanine in 16S rRNA. This is Ribosomal RNA small subunit methyltransferase G from Streptococcus pyogenes serotype M3 (strain ATCC BAA-595 / MGAS315).